Reading from the N-terminus, the 597-residue chain is Arginine--tRNA ligase (597 aa).

A 'HIGH' region motif is present at residues 125–135 (PNTNKPLHLGH).

The protein belongs to the class-I aminoacyl-tRNA synthetase family. In terms of assembly, monomer.

It is found in the cytoplasm. The catalysed reaction is tRNA(Arg) + L-arginine + ATP = L-arginyl-tRNA(Arg) + AMP + diphosphate. This Porphyromonas gingivalis (strain ATCC BAA-308 / W83) protein is Arginine--tRNA ligase.